The chain runs to 130 residues: Small ribosomal subunit protein uS11 (130 aa).

It belongs to the universal ribosomal protein uS11 family. As to quaternary structure, part of the 30S ribosomal subunit. Interacts with proteins S7 and S18. Binds to IF-3.

In terms of biological role, located on the platform of the 30S subunit, it bridges several disparate RNA helices of the 16S rRNA. Forms part of the Shine-Dalgarno cleft in the 70S ribosome. This is Small ribosomal subunit protein uS11 from Prochlorococcus marinus (strain MIT 9211).